A 702-amino-acid chain; its full sequence is 1,4-alpha-glucan-branching enzyme (702 aa).

Alanine 2 is modified (N-acetylalanine). Residues 62–63 and 91–93 contribute to the substrate site; these read NE and WAP. Tryptophan 107 serves as a coordination point for (1,4-alpha-D-glucosyl)n. A substrate-binding site is contributed by 118-121; the sequence is EYGK. Lysine 143 is a binding site for (1,4-alpha-D-glucosyl)n. Residue tyrosine 173 is modified to Phosphotyrosine. 333-336 contributes to the substrate binding site; sequence EVLR. The active-site Nucleophile is the aspartate 357. Glutamate 412 (proton donor) is an active-site residue.

This sequence belongs to the glycosyl hydrolase 13 family. GlgB subfamily. As to quaternary structure, monomer.

The catalysed reaction is Transfers a segment of a (1-&gt;4)-alpha-D-glucan chain to a primary hydroxy group in a similar glucan chain.. It functions in the pathway glycan biosynthesis; glycogen biosynthesis. Its function is as follows. Glycogen-branching enzyme participates in the glycogen biosynthetic process along with glycogenin and glycogen synthase. Generates alpha-1,6-glucosidic branches from alpha-1,4-linked glucose chains, to increase solubility of the glycogen polymer. The polypeptide is 1,4-alpha-glucan-branching enzyme (Gbe1) (Mus musculus (Mouse)).